Reading from the N-terminus, the 162-residue chain is 2-C-methyl-D-erythritol 2,4-cyclodiphosphate synthase (162 aa).

The a divalent metal cation site is built by D12 and H14. 4-CDP-2-C-methyl-D-erythritol 2-phosphate is bound by residues 12–14 and 38–39; these read DVH and HS. H46 serves as a coordination point for a divalent metal cation. Residues 60–62, 136–139, F143, and R146 each bind 4-CDP-2-C-methyl-D-erythritol 2-phosphate; these read DIG and TTTE.

This sequence belongs to the IspF family. In terms of assembly, homotrimer. It depends on a divalent metal cation as a cofactor.

The enzyme catalyses 4-CDP-2-C-methyl-D-erythritol 2-phosphate = 2-C-methyl-D-erythritol 2,4-cyclic diphosphate + CMP. It functions in the pathway isoprenoid biosynthesis; isopentenyl diphosphate biosynthesis via DXP pathway; isopentenyl diphosphate from 1-deoxy-D-xylulose 5-phosphate: step 4/6. Involved in the biosynthesis of isopentenyl diphosphate (IPP) and dimethylallyl diphosphate (DMAPP), two major building blocks of isoprenoid compounds. Catalyzes the conversion of 4-diphosphocytidyl-2-C-methyl-D-erythritol 2-phosphate (CDP-ME2P) to 2-C-methyl-D-erythritol 2,4-cyclodiphosphate (ME-CPP) with a corresponding release of cytidine 5-monophosphate (CMP). The chain is 2-C-methyl-D-erythritol 2,4-cyclodiphosphate synthase from Porphyromonas gingivalis (strain ATCC BAA-308 / W83).